Consider the following 262-residue polypeptide: Thiazole synthase (262 aa).

Residue K96 is the Schiff-base intermediate with DXP of the active site. 1-deoxy-D-xylulose 5-phosphate contacts are provided by residues G157, 184 to 185 (AG), and 206 to 207 (NT).

Belongs to the ThiG family. As to quaternary structure, homotetramer. Forms heterodimers with either ThiH or ThiS.

It is found in the cytoplasm. The catalysed reaction is [ThiS sulfur-carrier protein]-C-terminal-Gly-aminoethanethioate + 2-iminoacetate + 1-deoxy-D-xylulose 5-phosphate = [ThiS sulfur-carrier protein]-C-terminal Gly-Gly + 2-[(2R,5Z)-2-carboxy-4-methylthiazol-5(2H)-ylidene]ethyl phosphate + 2 H2O + H(+). Its pathway is cofactor biosynthesis; thiamine diphosphate biosynthesis. Functionally, catalyzes the rearrangement of 1-deoxy-D-xylulose 5-phosphate (DXP) to produce the thiazole phosphate moiety of thiamine. Sulfur is provided by the thiocarboxylate moiety of the carrier protein ThiS. In vitro, sulfur can be provided by H(2)S. This chain is Thiazole synthase, found in Legionella pneumophila (strain Lens).